The chain runs to 80 residues: D-alanyl carrier protein 1 (80 aa).

The Carrier domain occupies 1 to 80; that stretch reads MTMDDTKATV…KIVAKVENLQ (80 aa). Ser-38 is modified (O-(pantetheine 4'-phosphoryl)serine).

It belongs to the DltC family. In terms of processing, 4'-phosphopantetheine is transferred from CoA to a specific serine of apo-DCP.

The protein resides in the cytoplasm. It participates in cell wall biogenesis; lipoteichoic acid biosynthesis. Functionally, carrier protein involved in the D-alanylation of lipoteichoic acid (LTA). The loading of thioester-linked D-alanine onto DltC is catalyzed by D-alanine--D-alanyl carrier protein ligase DltA. The DltC-carried D-alanyl group is further transferred to cell membrane phosphatidylglycerol (PG) by forming an ester bond, probably catalyzed by DltD. D-alanylation of LTA plays an important role in modulating the properties of the cell wall in Gram-positive bacteria, influencing the net charge of the cell wall. The polypeptide is D-alanyl carrier protein 1 (Lactiplantibacillus plantarum (strain ATCC BAA-793 / NCIMB 8826 / WCFS1) (Lactobacillus plantarum)).